The following is a 57-amino-acid chain: Granulin-3 (57 aa).

Intrachain disulfides connect C4/C16 and C10/C26.

This sequence belongs to the granulin family. In terms of processing, granulins are disulfide bridged. As to expression, ubiquitous.

It localises to the secreted. In terms of biological role, granulins have possible cytokine-like activity. They may play a role in inflammation, wound repair, and tissue remodeling. The chain is Granulin-3 from Cyprinus carpio (Common carp).